Here is a 181-residue protein sequence, read N- to C-terminus: Adenine phosphoribosyltransferase (181 aa).

Belongs to the purine/pyrimidine phosphoribosyltransferase family. In terms of assembly, homodimer.

Its subcellular location is the cytoplasm. The catalysed reaction is AMP + diphosphate = 5-phospho-alpha-D-ribose 1-diphosphate + adenine. It functions in the pathway purine metabolism; AMP biosynthesis via salvage pathway; AMP from adenine: step 1/1. In terms of biological role, catalyzes a salvage reaction resulting in the formation of AMP, that is energically less costly than de novo synthesis. The sequence is that of Adenine phosphoribosyltransferase from Brucella anthropi (strain ATCC 49188 / DSM 6882 / CCUG 24695 / JCM 21032 / LMG 3331 / NBRC 15819 / NCTC 12168 / Alc 37) (Ochrobactrum anthropi).